Here is a 432-residue protein sequence, read N- to C-terminus: D-amino acid dehydrogenase (432 aa).

3 to 17 (VVILGSGVVGVTSAW) is an FAD binding site.

It belongs to the DadA oxidoreductase family. The cofactor is FAD.

It carries out the reaction a D-alpha-amino acid + A + H2O = a 2-oxocarboxylate + AH2 + NH4(+). The protein operates within amino-acid degradation; D-alanine degradation; NH(3) and pyruvate from D-alanine: step 1/1. Oxidative deamination of D-amino acids. This chain is D-amino acid dehydrogenase, found in Citrobacter koseri (strain ATCC BAA-895 / CDC 4225-83 / SGSC4696).